Reading from the N-terminus, the 336-residue chain is Palmitoyltransferase SWF1 (336 aa).

The Lumenal segment spans residues 1–2; it reads MS. The chain crosses the membrane as a helical span at residues 3–23; sequence WNLLFVLLIGFVVLILLSPVF. Residues 24–50 are Cytoplasmic-facing; sequence KSTWPFSTFYRNVFQPFLVDDQKYRWK. A helical transmembrane segment spans residues 51 to 71; that stretch reads LHLVPLFYTSIYLYLVYTYHM. Over 72 to 86 the chain is Lumenal; that stretch reads RVESTIKNELFLLER. A helical membrane pass occupies residues 87-107; that stretch reads ILIVPIIILPPVALGILAMVS. At 108–179 the chain is on the cytoplasmic side; that stretch reads RAEDSKDHKS…CIGKGNYLQF (72 aa). In terms of domain architecture, DHHC spans 134–184; the sequence is IKCSTCRIVKPARSKHCSICNRCVLVADHHCIWINNCIGKGNYLQFYLFLI. The chain crosses the membrane as a helical span at residues 180–200; that stretch reads YLFLISNIFSMCYAFLRLWYI. Over 201 to 216 the chain is Lumenal; the sequence is SLNSTSTLPRAVLTLT. The helical transmembrane segment at 217 to 237 threads the bilayer; it reads ILCGCFTIICAIFTYLQLAIV. At 238-336 the chain is on the cytoplasmic side; it reads KEGMTTNEQD…TFLANLTDLI (99 aa).

Belongs to the DHHC palmitoyltransferase family. SWF1 subfamily.

It is found in the endoplasmic reticulum membrane. The catalysed reaction is L-cysteinyl-[protein] + hexadecanoyl-CoA = S-hexadecanoyl-L-cysteinyl-[protein] + CoA. In terms of biological role, palmitoyltransferase that targets several endosomal SNAREs. Palmitoylates the SNAREs SNC1, SNC2, SYN8 and TLG1, at cysteine residues close to the cytoplasmic end of their transmembrane domain. May have a role in the cellular quality control of transmembrane domain-containing proteins. The chain is Palmitoyltransferase SWF1 (SWF1) from Saccharomyces cerevisiae (strain ATCC 204508 / S288c) (Baker's yeast).